The primary structure comprises 106 residues: Large ribosomal subunit protein uL24 (106 aa).

Residues 1–20 are disordered; sequence MNKRAKSKNREPLRKSPVKR. Positions 8–20 are enriched in basic and acidic residues; the sequence is KNREPLRKSPVKR.

Belongs to the universal ribosomal protein uL24 family. In terms of assembly, part of the 50S ribosomal subunit.

One of two assembly initiator proteins, it binds directly to the 5'-end of the 23S rRNA, where it nucleates assembly of the 50S subunit. In terms of biological role, one of the proteins that surrounds the polypeptide exit tunnel on the outside of the subunit. In Methylacidiphilum infernorum (isolate V4) (Methylokorus infernorum (strain V4)), this protein is Large ribosomal subunit protein uL24.